The sequence spans 305 residues: tRNA dimethylallyltransferase (305 aa).

ATP is bound at residue 8–15 (GPTASGKT). Residue 10–15 (TASGKT) participates in substrate binding. Positions 33 to 36 (DSQQ) are interaction with substrate tRNA.

Belongs to the IPP transferase family. In terms of assembly, monomer. Requires Mg(2+) as cofactor.

It carries out the reaction adenosine(37) in tRNA + dimethylallyl diphosphate = N(6)-dimethylallyladenosine(37) in tRNA + diphosphate. Functionally, catalyzes the transfer of a dimethylallyl group onto the adenine at position 37 in tRNAs that read codons beginning with uridine, leading to the formation of N6-(dimethylallyl)adenosine (i(6)A). The protein is tRNA dimethylallyltransferase of Anaeromyxobacter sp. (strain K).